The following is a 99-amino-acid chain: Small integral membrane protein 14 (99 aa).

Topologically, residues 1-49 are lumenal; that stretch reads MAEGGFDPCECVCSHEHAMRRLINLLRQSQSYCTDTECLQELPGPSGDN. Residues 50–70 form a helical membrane-spanning segment; the sequence is GISVTMILVAWMVIALILFLL. Topologically, residues 71 to 99 are cytoplasmic; sequence RPPNLRGSNLPGKPTSPHNGQDPPAPPVD. The segment at 77–99 is disordered; sequence GSNLPGKPTSPHNGQDPPAPPVD.

Its subcellular location is the endoplasmic reticulum membrane. The protein is Small integral membrane protein 14 (SMIM14) of Pongo abelii (Sumatran orangutan).